The chain runs to 1279 residues: ATP-dependent helicase/nuclease subunit A (1279 aa).

The region spanning 4-499 is the UvrD-like helicase ATP-binding domain; it reads TKWTDEQRQA…VKLFKNFRSR (496 aa). ATP is bound at residue 25–32; sequence AGAGAGKT. The UvrD-like helicase C-terminal domain maps to 526–853; sequence EEALKVGASY…RIMSIHKSKG (328 aa).

It belongs to the helicase family. AddA subfamily. Heterodimer of AddA and AddB/RexB. Mg(2+) is required as a cofactor.

The catalysed reaction is Couples ATP hydrolysis with the unwinding of duplex DNA by translocating in the 3'-5' direction.. It catalyses the reaction ATP + H2O = ADP + phosphate + H(+). The heterodimer acts as both an ATP-dependent DNA helicase and an ATP-dependent, dual-direction single-stranded exonuclease. Recognizes the chi site generating a DNA molecule suitable for the initiation of homologous recombination. The AddA nuclease domain is required for chi fragment generation; this subunit has the helicase and 3' -&gt; 5' nuclease activities. The chain is ATP-dependent helicase/nuclease subunit A from Clostridium botulinum (strain Loch Maree / Type A3).